Here is a 558-residue protein sequence, read N- to C-terminus: Pentatricopeptide repeat-containing protein At1g06140, mitochondrial (558 aa).

A mitochondrion-targeting transit peptide spans 1–79 (MLPVNRARAL…RNRHSWNTIL (79 aa)). PPR repeat units follow at residues 38-68 (EVVL…IPCW), 71-103 (NRHS…MRRH), 108-142 (DSFN…GLDK), 143-173 (DDYV…IPVR), 174-208 (NSVL…GLAL), 209-243 (DALT…SFID), 245-275 (SDYL…SVDR), 276-310 (NVVM…SILP), 311-345 (NQCT…GIEM), 346-376 (DAVN…MPER), 377-411 (NVIS…NVVP), 412-447 (NSVT…GVVP), and 448-482 (EEEH…PMAS). Residues 483–558 (AWGALLSACR…HVGQSATEVG (76 aa)) form a type E motif region.

The protein belongs to the PPR family. PCMP-E subfamily.

The protein localises to the mitochondrion. The chain is Pentatricopeptide repeat-containing protein At1g06140, mitochondrial (PCMP-E61) from Arabidopsis thaliana (Mouse-ear cress).